A 245-amino-acid polypeptide reads, in one-letter code: 1-(5-phosphoribosyl)-5-[(5-phosphoribosylamino)methylideneamino] imidazole-4-carboxamide isomerase (245 aa).

The active-site Proton acceptor is Asp8. Residue Asp130 is the Proton donor of the active site.

Belongs to the HisA/HisF family.

The protein resides in the cytoplasm. It catalyses the reaction 1-(5-phospho-beta-D-ribosyl)-5-[(5-phospho-beta-D-ribosylamino)methylideneamino]imidazole-4-carboxamide = 5-[(5-phospho-1-deoxy-D-ribulos-1-ylimino)methylamino]-1-(5-phospho-beta-D-ribosyl)imidazole-4-carboxamide. Its pathway is amino-acid biosynthesis; L-histidine biosynthesis; L-histidine from 5-phospho-alpha-D-ribose 1-diphosphate: step 4/9. The polypeptide is 1-(5-phosphoribosyl)-5-[(5-phosphoribosylamino)methylideneamino] imidazole-4-carboxamide isomerase (Pseudomonas putida (strain W619)).